Here is a 636-residue protein sequence, read N- to C-terminus: Threonine--tRNA ligase (636 aa).

In terms of domain architecture, TGS spans 1-63 (MPMITITLPD…EHDASLRIIT (63 aa)). A catalytic region spans residues 245–536 (DHRKIGKAQD…LIEHHAGAFP (292 aa)). Zn(2+)-binding residues include Cys-336, His-387, and His-513.

Belongs to the class-II aminoacyl-tRNA synthetase family. As to quaternary structure, homodimer. Zn(2+) serves as cofactor.

It localises to the cytoplasm. It catalyses the reaction tRNA(Thr) + L-threonine + ATP = L-threonyl-tRNA(Thr) + AMP + diphosphate + H(+). In terms of biological role, catalyzes the attachment of threonine to tRNA(Thr) in a two-step reaction: L-threonine is first activated by ATP to form Thr-AMP and then transferred to the acceptor end of tRNA(Thr). Also edits incorrectly charged L-seryl-tRNA(Thr). This is Threonine--tRNA ligase from Xanthomonas campestris pv. campestris (strain 8004).